A 208-amino-acid chain; its full sequence is Thiamine-phosphate synthase (208 aa).

Residues 38–42 and asparagine 70 each bind 4-amino-2-methyl-5-(diphosphooxymethyl)pyrimidine; that span reads QYRSK. Residues aspartate 71 and aspartate 90 each contribute to the Mg(2+) site. Threonine 109 contributes to the 4-amino-2-methyl-5-(diphosphooxymethyl)pyrimidine binding site. 136-138 is a 2-[(2R,5Z)-2-carboxy-4-methylthiazol-5(2H)-ylidene]ethyl phosphate binding site; it reads SAT. Lysine 139 contributes to the 4-amino-2-methyl-5-(diphosphooxymethyl)pyrimidine binding site. 2-[(2R,5Z)-2-carboxy-4-methylthiazol-5(2H)-ylidene]ethyl phosphate is bound by residues glycine 166 and 186 to 187; that span reads VS.

This sequence belongs to the thiamine-phosphate synthase family. Mg(2+) is required as a cofactor.

It catalyses the reaction 2-[(2R,5Z)-2-carboxy-4-methylthiazol-5(2H)-ylidene]ethyl phosphate + 4-amino-2-methyl-5-(diphosphooxymethyl)pyrimidine + 2 H(+) = thiamine phosphate + CO2 + diphosphate. The catalysed reaction is 2-(2-carboxy-4-methylthiazol-5-yl)ethyl phosphate + 4-amino-2-methyl-5-(diphosphooxymethyl)pyrimidine + 2 H(+) = thiamine phosphate + CO2 + diphosphate. It carries out the reaction 4-methyl-5-(2-phosphooxyethyl)-thiazole + 4-amino-2-methyl-5-(diphosphooxymethyl)pyrimidine + H(+) = thiamine phosphate + diphosphate. It functions in the pathway cofactor biosynthesis; thiamine diphosphate biosynthesis; thiamine phosphate from 4-amino-2-methyl-5-diphosphomethylpyrimidine and 4-methyl-5-(2-phosphoethyl)-thiazole: step 1/1. Condenses 4-methyl-5-(beta-hydroxyethyl)thiazole monophosphate (THZ-P) and 2-methyl-4-amino-5-hydroxymethyl pyrimidine pyrophosphate (HMP-PP) to form thiamine monophosphate (TMP). The chain is Thiamine-phosphate synthase from Aromatoleum aromaticum (strain DSM 19018 / LMG 30748 / EbN1) (Azoarcus sp. (strain EbN1)).